Reading from the N-terminus, the 81-residue chain is Neuronatin (81 aa).

This sequence belongs to the neuronatin family.

May participate in the maintenance of segment identity in the hindbrain and pituitary development, and maturation or maintenance of the overall structure of the nervous system. May function as a regulatory subunit of ion channels. The chain is Neuronatin (NNAT) from Mesocricetus auratus (Golden hamster).